Here is a 183-residue protein sequence, read N- to C-terminus: Dual-action ribosomal maturation protein DarP (183 aa).

This sequence belongs to the DarP family.

Its subcellular location is the cytoplasm. Functionally, member of a network of 50S ribosomal subunit biogenesis factors which assembles along the 30S-50S interface, preventing incorrect 23S rRNA structures from forming. Promotes peptidyl transferase center (PTC) maturation. In Salmonella arizonae (strain ATCC BAA-731 / CDC346-86 / RSK2980), this protein is Dual-action ribosomal maturation protein DarP.